Consider the following 149-residue polypeptide: Lymphocyte antigen 6 complex locus protein G5c (149 aa).

Residues 1 to 41 form the signal peptide; sequence MLFMAGPAASWSLRPLGLHGVPQALCAVLLTVLVMKTLVLG. The 91-residue stretch at 59-149 folds into the UPAR/Ly6 domain; the sequence is LNCYRCLLET…NPDNRKNSMH (91 aa). 5 disulfides stabilise this stretch: Cys61–Cys88, Cys64–Cys73, Cys80–Cys106, Cys115–Cys132, and Cys133–Cys138. N-linked (GlcNAc...) asparagine glycosylation occurs at Asn95.

As to quaternary structure, forms oligomers. Post-translationally, N-glycosylated. In terms of tissue distribution, detected in adult brain.

The protein resides in the secreted. Its function is as follows. May have a role in hematopoietic cell differentiation. This Mus musculus (Mouse) protein is Lymphocyte antigen 6 complex locus protein G5c (Ly6g5c).